The chain runs to 356 residues: tRNA pseudouridine synthase D (356 aa).

Catalysis depends on aspartate 84, which acts as the Nucleophile. The region spanning 159–302 (GVPNYYGPQR…RRGARRPIRV (144 aa)) is the TRUD domain.

The protein belongs to the pseudouridine synthase TruD family.

The enzyme catalyses uridine(13) in tRNA = pseudouridine(13) in tRNA. Its function is as follows. Responsible for synthesis of pseudouridine from uracil-13 in transfer RNAs. The sequence is that of tRNA pseudouridine synthase D from Thermus thermophilus (strain ATCC 27634 / DSM 579 / HB8).